Reading from the N-terminus, the 438-residue chain is UDP-N-acetylmuramoylalanine--D-glutamate ligase (438 aa).

Position 112-118 (112-118 (GSNGKST)) interacts with ATP.

The protein belongs to the MurCDEF family.

It localises to the cytoplasm. It carries out the reaction UDP-N-acetyl-alpha-D-muramoyl-L-alanine + D-glutamate + ATP = UDP-N-acetyl-alpha-D-muramoyl-L-alanyl-D-glutamate + ADP + phosphate + H(+). Its pathway is cell wall biogenesis; peptidoglycan biosynthesis. Cell wall formation. Catalyzes the addition of glutamate to the nucleotide precursor UDP-N-acetylmuramoyl-L-alanine (UMA). This Yersinia pestis bv. Antiqua (strain Antiqua) protein is UDP-N-acetylmuramoylalanine--D-glutamate ligase.